The following is a 67-amino-acid chain: Neurotoxin Cex9 (67 aa).

Residues 1-65 (KDGYPVEVTG…TWPLPNKSCG (65 aa)) enclose the LCN-type CS-alpha/beta domain. Disulfide bonds link Cys11-Cys64, Cys15-Cys40, Cys24-Cys45, and Cys28-Cys47. A Cysteine amide modification is found at Cys64. Positions 65–67 (GKK) are excised as a propeptide.

The protein belongs to the long (4 C-C) scorpion toxin superfamily. Sodium channel inhibitor family. Beta subfamily. In terms of tissue distribution, expressed by the venom gland.

The protein localises to the secreted. Its function is as follows. Beta toxins bind voltage-independently at site-4 of sodium channels (Nav) and shift the voltage of activation toward more negative potentials thereby affecting sodium channel activation and promoting spontaneous and repetitive firing. This Centruroides exilicauda (Bark scorpion) protein is Neurotoxin Cex9.